The chain runs to 632 residues: Phosphomethylpyrimidine synthase (632 aa).

Residues 1 to 13 (MNIRSNPDTTLPA) are compositionally biased toward polar residues. The disordered stretch occupies residues 1-26 (MNIRSNPDTTLPAVTTGPLPSSRKIF). Residues Asn221, Met250, Tyr279, His315, 335–337 (SRG), 376–379 (DGLR), and Glu415 contribute to the substrate site. Zn(2+) is bound at residue His419. Residue Tyr442 coordinates substrate. His483 is a binding site for Zn(2+). [4Fe-4S] cluster-binding residues include Cys563, Cys566, and Cys571.

It belongs to the ThiC family. As to quaternary structure, homodimer. Requires [4Fe-4S] cluster as cofactor.

The enzyme catalyses 5-amino-1-(5-phospho-beta-D-ribosyl)imidazole + S-adenosyl-L-methionine = 4-amino-2-methyl-5-(phosphooxymethyl)pyrimidine + CO + 5'-deoxyadenosine + formate + L-methionine + 3 H(+). Its pathway is cofactor biosynthesis; thiamine diphosphate biosynthesis. Catalyzes the synthesis of the hydroxymethylpyrimidine phosphate (HMP-P) moiety of thiamine from aminoimidazole ribotide (AIR) in a radical S-adenosyl-L-methionine (SAM)-dependent reaction. In Afipia carboxidovorans (strain ATCC 49405 / DSM 1227 / KCTC 32145 / OM5) (Oligotropha carboxidovorans), this protein is Phosphomethylpyrimidine synthase.